A 571-amino-acid polypeptide reads, in one-letter code: uncharacterized protein (571 aa).

This is an uncharacterized protein from Methanocaldococcus jannaschii (strain ATCC 43067 / DSM 2661 / JAL-1 / JCM 10045 / NBRC 100440) (Methanococcus jannaschii).